We begin with the raw amino-acid sequence, 346 residues long: Protein pelota homolog (346 aa).

Belongs to the eukaryotic release factor 1 family. Pelota subfamily. Monomer. It depends on a divalent metal cation as a cofactor.

It is found in the cytoplasm. In terms of biological role, may function in recognizing stalled ribosomes, interact with stem-loop structures in stalled mRNA molecules, and effect endonucleolytic cleavage of the mRNA. May play a role in the release non-functional ribosomes and degradation of damaged mRNAs. Has endoribonuclease activity. The polypeptide is Protein pelota homolog (Ignicoccus hospitalis (strain KIN4/I / DSM 18386 / JCM 14125)).